The sequence spans 174 residues: Dual-action ribosomal maturation protein DarP (174 aa).

This sequence belongs to the DarP family.

It is found in the cytoplasm. Member of a network of 50S ribosomal subunit biogenesis factors which assembles along the 30S-50S interface, preventing incorrect 23S rRNA structures from forming. Promotes peptidyl transferase center (PTC) maturation. In Vibrio atlanticus (strain LGP32) (Vibrio splendidus (strain Mel32)), this protein is Dual-action ribosomal maturation protein DarP.